We begin with the raw amino-acid sequence, 297 residues long: Cell death peptidase (297 aa).

2 consecutive transmembrane segments (helical) span residues 61 to 82 (IVLTVASLEYIWAFSNFFWVFT) and 149 to 178 (IFLCAIAWILHHEISHVVLQHPLVTTAFST).

This sequence belongs to the peptidase U49 family.

The protein resides in the cell membrane. Its function is as follows. Interacts with a short DNA sequence about one-quarter of the way into the major capsid protein gene 23 of T4; general translation inhibition occurs when this late gene of the virus is expressed. The protein is Cell death peptidase (lit) of Escherichia coli (strain K12).